The following is a 663-amino-acid chain: UvrABC system protein B (663 aa).

Positions 31–271 constitute a Helicase ATP-binding domain; that stretch reads DNIEGGEKAQ…EQSISKIQAE (241 aa). An ATP-binding site is contributed by 44–51; that stretch reads GATGTGKT. Positions 97-120 match the Beta-hairpin motif; that stretch reads YYDYYQPEAYVPSSDTYIEKDSSV. The region spanning 435-601 is the Helicase C-terminal domain; sequence QMDDLLGEIN…TIKKDIRDLI (167 aa). The UVR domain occupies 627-662; sequence QEAIKQLQKNMQEAAELLDFELAAQLRDLILELKAM.

Belongs to the UvrB family. Forms a heterotetramer with UvrA during the search for lesions. Interacts with UvrC in an incision complex.

It localises to the cytoplasm. Its function is as follows. The UvrABC repair system catalyzes the recognition and processing of DNA lesions. A damage recognition complex composed of 2 UvrA and 2 UvrB subunits scans DNA for abnormalities. Upon binding of the UvrA(2)B(2) complex to a putative damaged site, the DNA wraps around one UvrB monomer. DNA wrap is dependent on ATP binding by UvrB and probably causes local melting of the DNA helix, facilitating insertion of UvrB beta-hairpin between the DNA strands. Then UvrB probes one DNA strand for the presence of a lesion. If a lesion is found the UvrA subunits dissociate and the UvrB-DNA preincision complex is formed. This complex is subsequently bound by UvrC and the second UvrB is released. If no lesion is found, the DNA wraps around the other UvrB subunit that will check the other stand for damage. This chain is UvrABC system protein B, found in Streptococcus equi subsp. equi (strain 4047).